A 151-amino-acid chain; its full sequence is Ribosomal RNA large subunit methyltransferase H (151 aa).

S-adenosyl-L-methionine-binding positions include Leu-70, Gly-99, and 118–123 (LSKLTF).

It belongs to the RNA methyltransferase RlmH family. In terms of assembly, homodimer.

The protein localises to the cytoplasm. It carries out the reaction pseudouridine(1915) in 23S rRNA + S-adenosyl-L-methionine = N(3)-methylpseudouridine(1915) in 23S rRNA + S-adenosyl-L-homocysteine + H(+). Specifically methylates the pseudouridine at position 1915 (m3Psi1915) in 23S rRNA. This chain is Ribosomal RNA large subunit methyltransferase H, found in Gloeobacter violaceus (strain ATCC 29082 / PCC 7421).